Here is a 104-residue protein sequence, read N- to C-terminus: MIVTTTPSVEGRQIAEYLGIVSAEAIMGANFFRDLAASITDLIGGRAGSYESKLREGREECLRELVAEAARLGADAVVGVDIDYEVVGESMLMVTASGTAVRLR.

The protein belongs to the UPF0145 family.

The protein is UPF0145 protein STH1265 of Symbiobacterium thermophilum (strain DSM 24528 / JCM 14929 / IAM 14863 / T).